The following is a 316-amino-acid chain: Beta-ketoacyl-[acyl-carrier-protein] synthase III (316 aa).

Active-site residues include C112 and H243. Residues 244-248 are ACP-binding; that stretch reads QANIR. The active site involves N273.

It belongs to the thiolase-like superfamily. FabH family. Homodimer.

The protein resides in the cytoplasm. The catalysed reaction is malonyl-[ACP] + acetyl-CoA + H(+) = 3-oxobutanoyl-[ACP] + CO2 + CoA. It participates in lipid metabolism; fatty acid biosynthesis. Its function is as follows. Catalyzes the condensation reaction of fatty acid synthesis by the addition to an acyl acceptor of two carbons from malonyl-ACP. Catalyzes the first condensation reaction which initiates fatty acid synthesis and may therefore play a role in governing the total rate of fatty acid production. Possesses both acetoacetyl-ACP synthase and acetyl transacylase activities. Its substrate specificity determines the biosynthesis of branched-chain and/or straight-chain of fatty acids. In Actinobacillus pleuropneumoniae serotype 5b (strain L20), this protein is Beta-ketoacyl-[acyl-carrier-protein] synthase III.